The primary structure comprises 641 residues: Threonine--tRNA ligase (641 aa).

A TGS domain is found at 1-61; it reads MIKINLLNHQ…TQDGDLEILA (61 aa). The interval 240 to 538 is catalytic; the sequence is DHKRLNKKLD…LIEENKGVFP (299 aa). Zn(2+) contacts are provided by Cys-334, His-385, and His-515.

The protein belongs to the class-II aminoacyl-tRNA synthetase family. Homodimer. Zn(2+) is required as a cofactor.

Its subcellular location is the cytoplasm. The catalysed reaction is tRNA(Thr) + L-threonine + ATP = L-threonyl-tRNA(Thr) + AMP + diphosphate + H(+). Catalyzes the attachment of threonine to tRNA(Thr) in a two-step reaction: L-threonine is first activated by ATP to form Thr-AMP and then transferred to the acceptor end of tRNA(Thr). Also edits incorrectly charged L-seryl-tRNA(Thr). This chain is Threonine--tRNA ligase, found in Phytoplasma australiense.